Reading from the N-terminus, the 517-residue chain is Ribonuclease Y (517 aa).

A helical membrane pass occupies residues 1–21 (MIEVVVGIGAGLIGIGAGYLV). The KH domain occupies 207–273 (LINVVNIKND…TRVIELLVED (67 aa)). The region spanning 333–426 (ALAHSLEVAH…VCAADALSAA (94 aa)) is the HD domain.

Belongs to the RNase Y family.

It localises to the cell membrane. In terms of biological role, endoribonuclease that initiates mRNA decay. The sequence is that of Ribonuclease Y from Campylobacter fetus subsp. fetus (strain 82-40).